A 487-amino-acid polypeptide reads, in one-letter code: Probable cobyric acid synthase (487 aa).

The GATase cobBQ-type domain maps to 246-431 (LVRIAVIRLP…LHGLFMVPAA (186 aa)). Cysteine 325 (nucleophile) is an active-site residue. The active site involves histidine 423.

The protein belongs to the CobB/CobQ family. CobQ subfamily.

It functions in the pathway cofactor biosynthesis; adenosylcobalamin biosynthesis. In terms of biological role, catalyzes amidations at positions B, D, E, and G on adenosylcobyrinic A,C-diamide. NH(2) groups are provided by glutamine, and one molecule of ATP is hydrogenolyzed for each amidation. The protein is Probable cobyric acid synthase of Methanosphaerula palustris (strain ATCC BAA-1556 / DSM 19958 / E1-9c).